The primary structure comprises 268 residues: Interleukin-2 receptor subunit alpha (268 aa).

The N-terminal stretch at 1 to 21 is a signal peptide; it reads MEPRLLMLGFLSLTIVPSCRA. A Sushi 1 domain is found at 22–79; the sequence is ELCLYDPPEVPNATFKALSYKNGTILNCECKRGFRRLKELVYMRCLGNSWSSNCQCTS. The Extracellular portion of the chain corresponds to 22-236; it reads ELCLYDPPEV…ETFVLTMEYK (215 aa). 3 disulfide bridges follow: Cys-24–Cys-66, Cys-49–Cys-75, and Cys-51–Cys-77. N-linked (GlcNAc...) asparagine glycans are attached at residues Asn-33 and Asn-43. A disordered region spans residues 86-109; that stretch reads RKQVTAQLEHQKEQQTTTDMQKPT. Over residues 88–109 the composition is skewed to polar residues; it reads QVTAQLEHQKEQQTTTDMQKPT. N-linked (GlcNAc...) asparagine glycosylation occurs at Asn-116. The Sushi 2 domain occupies 119–182; it reads GHCREPPPWK…WTQPQLTCVD (64 aa). 2 disulfide bridges follow: Cys-121–Cys-164 and Cys-148–Cys-180. The segment at 189-219 is disordered; that stretch reads FLASEESQGSRNSSPESETSCPITTTDFPQP. A compositionally biased stretch (polar residues) spans 193 to 211; the sequence is EESQGSRNSSPESETSCPI. A helical membrane pass occupies residues 237-257; it reads VAVASCLFLLISILLLSGLTW. The Cytoplasmic segment spans residues 258–268; the sequence is QHRWRKSRRTI.

As to quaternary structure, non-covalent dimer of an alpha and a beta subunit. IL2R exists in 3 different forms: a high affinity dimer, an intermediate affinity monomer (beta subunit), and a low affinity monomer (alpha subunit). The high and intermediate affinity forms also associate with a gamma subunit.

The protein localises to the membrane. In terms of biological role, receptor for interleukin-2. The receptor is involved in the regulation of immune tolerance by controlling regulatory T cells (TREGs) activity. TREGs suppress the activation and expansion of autoreactive T-cells. This is Interleukin-2 receptor subunit alpha (Il2ra) from Mus musculus (Mouse).